The chain runs to 375 residues: CCA-adding enzyme (375 aa).

Residues glycine 8 and arginine 11 each coordinate ATP. Glycine 8 and arginine 11 together coordinate CTP. Mg(2+) contacts are provided by aspartate 21 and aspartate 23. Arginine 91, arginine 137, and arginine 140 together coordinate ATP. CTP is bound by residues arginine 91, arginine 137, and arginine 140.

Belongs to the tRNA nucleotidyltransferase/poly(A) polymerase family. Bacterial CCA-adding enzyme type 2 subfamily. Mg(2+) serves as cofactor.

It catalyses the reaction a tRNA precursor + 2 CTP + ATP = a tRNA with a 3' CCA end + 3 diphosphate. It carries out the reaction a tRNA with a 3' CCA end + 2 CTP + ATP = a tRNA with a 3' CCACCA end + 3 diphosphate. Catalyzes the addition and repair of the essential 3'-terminal CCA sequence in tRNAs without using a nucleic acid template. Adds these three nucleotides in the order of C, C, and A to the tRNA nucleotide-73, using CTP and ATP as substrates and producing inorganic pyrophosphate. tRNA 3'-terminal CCA addition is required both for tRNA processing and repair. Also involved in tRNA surveillance by mediating tandem CCA addition to generate a CCACCA at the 3' terminus of unstable tRNAs. While stable tRNAs receive only 3'-terminal CCA, unstable tRNAs are marked with CCACCA and rapidly degraded. This Pseudomonas entomophila (strain L48) protein is CCA-adding enzyme.